A 260-amino-acid chain; its full sequence is Hemin import ATP-binding protein HmuV (260 aa).

The ABC transporter domain maps to 6 to 242; sequence LSGRNISMKY…ERIEQVYGYR (237 aa). 38–45 lines the ATP pocket; the sequence is GPNGAGKS.

Belongs to the ABC transporter superfamily. Heme (hemin) importer (TC 3.A.1.14.5) family. The complex is composed of two ATP-binding proteins (HmuV), two transmembrane proteins (HmuU) and a solute-binding protein (HmuT).

It localises to the cell inner membrane. Its function is as follows. Part of the ABC transporter complex HmuTUV involved in hemin import. Responsible for energy coupling to the transport system. In Vibrio parahaemolyticus serotype O3:K6 (strain RIMD 2210633), this protein is Hemin import ATP-binding protein HmuV.